Consider the following 429-residue polypeptide: Acetylornithine aminotransferase (429 aa).

Pyridoxal 5'-phosphate contacts are provided by residues 126 to 127 and F160; that span reads GA. R163 contributes to the N(2)-acetyl-L-ornithine binding site. Residue 251-254 coordinates pyridoxal 5'-phosphate; it reads DEVQ. Position 280 is an N6-(pyridoxal phosphate)lysine (K280). S307 provides a ligand contact to N(2)-acetyl-L-ornithine. T308 is a binding site for pyridoxal 5'-phosphate.

It belongs to the class-III pyridoxal-phosphate-dependent aminotransferase family. ArgD subfamily. As to quaternary structure, homodimer. Pyridoxal 5'-phosphate serves as cofactor.

The protein localises to the cytoplasm. The catalysed reaction is N(2)-acetyl-L-ornithine + 2-oxoglutarate = N-acetyl-L-glutamate 5-semialdehyde + L-glutamate. Its pathway is amino-acid biosynthesis; L-arginine biosynthesis; N(2)-acetyl-L-ornithine from L-glutamate: step 4/4. With respect to regulation, N-acetylornithine aminotransferase activity is stimulated by the addition of Mg(2+), Ca(2+) or Mn(2+), and inhibited by the addition of Zn(2+), Cu(2+), Co(2+) or Ni(2+). Functionally, catalyzes the reversible conversion of N-acetylornithine to N-acetylglutamate-5-semialdehyde. In vitro, also shows very low ornithine aminotransferase (OAT) and gamma-aminobutyrate aminotransferase (GABA-AT) activity, catalyzing the conversion of ornithine (Orn) to glutamate-5-semialdehyde and of gamma-aminobutyric acid (GABA) to succinate semialdehyde. It has been shown to function as a GABA-AT and contributes to closing the tricarboxylic acid cycle of Synechocystis sp. PCC6803 via the GABA shunt. However, the catalytic efficiency toward N-acetylornithine is 2500-fold and 10700-fold higher than that toward ornithine and gamma-aminobutyrate, respectively, indicating that the protein mainly functions as an N-acetylornithine aminotransferase. This chain is Acetylornithine aminotransferase, found in Synechocystis sp. (strain ATCC 27184 / PCC 6803 / Kazusa).